The primary structure comprises 80 residues: Exodeoxyribonuclease 7 small subunit (80 aa).

Belongs to the XseB family. Heterooligomer composed of large and small subunits.

It localises to the cytoplasm. The catalysed reaction is Exonucleolytic cleavage in either 5'- to 3'- or 3'- to 5'-direction to yield nucleoside 5'-phosphates.. Bidirectionally degrades single-stranded DNA into large acid-insoluble oligonucleotides, which are then degraded further into small acid-soluble oligonucleotides. This chain is Exodeoxyribonuclease 7 small subunit, found in Aliivibrio salmonicida (strain LFI1238) (Vibrio salmonicida (strain LFI1238)).